We begin with the raw amino-acid sequence, 256 residues long: Proteasome subunit alpha (256 aa).

The disordered stretch occupies residues 235–256 (ELDSNGSDGNGDAPELNGGSSD).

This sequence belongs to the peptidase T1A family. The 20S proteasome core is composed of 14 alpha and 14 beta subunits that assemble into four stacked heptameric rings, resulting in a barrel-shaped structure. The two inner rings, each composed of seven catalytic beta subunits, are sandwiched by two outer rings, each composed of seven alpha subunits. The catalytic chamber with the active sites is on the inside of the barrel. Has a gated structure, the ends of the cylinder being occluded by the N-termini of the alpha-subunits. Is capped by the proteasome-associated ATPase, ARC.

It localises to the cytoplasm. It functions in the pathway protein degradation; proteasomal Pup-dependent pathway. With respect to regulation, the formation of the proteasomal ATPase ARC-20S proteasome complex, likely via the docking of the C-termini of ARC into the intersubunit pockets in the alpha-rings, may trigger opening of the gate for substrate entry. Interconversion between the open-gate and close-gate conformations leads to a dynamic regulation of the 20S proteasome proteolysis activity. Its function is as follows. Component of the proteasome core, a large protease complex with broad specificity involved in protein degradation. The protein is Proteasome subunit alpha of Mycolicibacterium paratuberculosis (strain ATCC BAA-968 / K-10) (Mycobacterium paratuberculosis).